Reading from the N-terminus, the 101-residue chain is Small ribosomal subunit protein uS14 (101 aa).

A compositionally biased stretch (basic and acidic residues) spans 1–10; sequence MAKNSMVERD. The segment at 1 to 20 is disordered; sequence MAKNSMVERDRKRRKLAQKY.

It belongs to the universal ribosomal protein uS14 family. Part of the 30S ribosomal subunit. Contacts proteins S3 and S10.

Its function is as follows. Binds 16S rRNA, required for the assembly of 30S particles and may also be responsible for determining the conformation of the 16S rRNA at the A site. In Halorhodospira halophila (strain DSM 244 / SL1) (Ectothiorhodospira halophila (strain DSM 244 / SL1)), this protein is Small ribosomal subunit protein uS14.